The following is a 303-amino-acid chain: Glycine--tRNA ligase alpha subunit (303 aa).

Belongs to the class-II aminoacyl-tRNA synthetase family. As to quaternary structure, tetramer of two alpha and two beta subunits.

The protein resides in the cytoplasm. The enzyme catalyses tRNA(Gly) + glycine + ATP = glycyl-tRNA(Gly) + AMP + diphosphate. In Erwinia tasmaniensis (strain DSM 17950 / CFBP 7177 / CIP 109463 / NCPPB 4357 / Et1/99), this protein is Glycine--tRNA ligase alpha subunit.